We begin with the raw amino-acid sequence, 354 residues long: uncharacterized protein (354 aa).

Residues 96–130 (QVCPASAPNGKRAMKIPKVKEPRGENSSKKSSADQ) form a disordered region. The segment covering 113–127 (KVKEPRGENSSKKSS) has biased composition (basic and acidic residues).

This is an uncharacterized protein from Caenorhabditis elegans.